Here is a 412-residue protein sequence, read N- to C-terminus: Multifunctional CCA protein (412 aa).

The ATP site is built by Gly-8 and Arg-11. 2 residues coordinate CTP: Gly-8 and Arg-11. 2 residues coordinate Mg(2+): Asp-21 and Asp-23. Residues Arg-91, Arg-138, and Arg-141 each contribute to the ATP site. Positions 91, 138, and 141 each coordinate CTP. The region spanning 229 to 334 (RGQHTLLALQ…LELFNQLDVW (106 aa)) is the HD domain.

It belongs to the tRNA nucleotidyltransferase/poly(A) polymerase family. Bacterial CCA-adding enzyme type 1 subfamily. In terms of assembly, monomer. Can also form homodimers and oligomers. The cofactor is Mg(2+). Ni(2+) is required as a cofactor.

It catalyses the reaction a tRNA precursor + 2 CTP + ATP = a tRNA with a 3' CCA end + 3 diphosphate. The enzyme catalyses a tRNA with a 3' CCA end + 2 CTP + ATP = a tRNA with a 3' CCACCA end + 3 diphosphate. Functionally, catalyzes the addition and repair of the essential 3'-terminal CCA sequence in tRNAs without using a nucleic acid template. Adds these three nucleotides in the order of C, C, and A to the tRNA nucleotide-73, using CTP and ATP as substrates and producing inorganic pyrophosphate. tRNA 3'-terminal CCA addition is required both for tRNA processing and repair. Also involved in tRNA surveillance by mediating tandem CCA addition to generate a CCACCA at the 3' terminus of unstable tRNAs. While stable tRNAs receive only 3'-terminal CCA, unstable tRNAs are marked with CCACCA and rapidly degraded. This chain is Multifunctional CCA protein, found in Haemophilus ducreyi (strain 35000HP / ATCC 700724).